A 121-amino-acid polypeptide reads, in one-letter code: Fluoride-specific ion channel FluC 2 (121 aa).

A run of 4 helical transmembrane segments spans residues 3 to 23 (YLFV…LSTL), 27 to 47 (SGLP…MGYL), 64 to 84 (GVTT…FELV), and 92 to 112 (IALL…FCWF). Residues Gly71 and Thr74 each coordinate Na(+).

The protein belongs to the fluoride channel Fluc/FEX (TC 1.A.43) family.

Its subcellular location is the cell membrane. The enzyme catalyses fluoride(in) = fluoride(out). With respect to regulation, na(+) is not transported, but it plays an essential structural role and its presence is essential for fluoride channel function. Fluoride-specific ion channel. Important for reducing fluoride concentration in the cell, thus reducing its toxicity. This is Fluoride-specific ion channel FluC 2 from Staphylococcus haemolyticus (strain JCSC1435).